The primary structure comprises 727 residues: Protein edg-1 (727 aa).

The tract at residues 703-727 (FAESSVKPTTSSAYGNSSNFSRYAD) is disordered.

In terms of assembly, may interact with deps-1 and prg-1.

The protein resides in the cytoplasmic granule. Functionally, plays a role in regulating deps-1 cluster formation in the germline. This chain is Protein edg-1, found in Caenorhabditis elegans.